A 167-amino-acid chain; its full sequence is Cytochrome c-type biogenesis protein CcmE (167 aa).

Residues 1 to 7 lie on the Cytoplasmic side of the membrane; sequence MTRKQRR. A helical; Signal-anchor for type II membrane protein membrane pass occupies residues 8 to 28; sequence LLMIGGAGVVLIVAVGLVLNA. Residues 29-167 lie on the Periplasmic side of the membrane; it reads LRDSIVFFST…TSANAAEGGK (139 aa). Residues histidine 122 and tyrosine 126 each coordinate heme. The segment covering 137–150 has biased composition (basic and acidic residues); the sequence is KDGHWKDDYGKKSP. A disordered region spans residues 137–167; the sequence is KDGHWKDDYGKKSPGETTAGQTSANAAEGGK. Polar residues predominate over residues 151-161; sequence GETTAGQTSAN.

Belongs to the CcmE/CycJ family.

The protein localises to the cell inner membrane. In terms of biological role, heme chaperone required for the biogenesis of c-type cytochromes. Transiently binds heme delivered by CcmC and transfers the heme to apo-cytochromes in a process facilitated by CcmF and CcmH. The sequence is that of Cytochrome c-type biogenesis protein CcmE from Rhodopseudomonas palustris (strain ATCC BAA-98 / CGA009).